The chain runs to 714 residues: Phosphate acetyltransferase (714 aa).

The tract at residues 391 to 714 (AFRYQLTELA…LTAIQSAQQQ (324 aa)) is phosphate acetyltransferase.

The protein in the N-terminal section; belongs to the CobB/CobQ family. This sequence in the C-terminal section; belongs to the phosphate acetyltransferase and butyryltransferase family. In terms of assembly, homohexamer.

It is found in the cytoplasm. It carries out the reaction acetyl-CoA + phosphate = acetyl phosphate + CoA. It participates in metabolic intermediate biosynthesis; acetyl-CoA biosynthesis; acetyl-CoA from acetate: step 2/2. Inhibited by NADH and ATP. Pyruvate and PEP act as activators of the acetyl phosphate forming reaction while inhibiting the formation of acetyl-CoA. Functionally, involved in acetate metabolism. Catalyzes the reversible interconversion of acetyl-CoA and acetyl phosphate. The direction of the overall reaction changes depending on growth conditions. On minimal medium acetyl-CoA is generated. In rich medium acetyl-CoA is converted to acetate and allowing the cell to dump the excess of acetylation potential in exchange for energy in the form of ATP. The main pathway for acetate production during exponential phase. This chain is Phosphate acetyltransferase (pta), found in Escherichia coli (strain K12).